Consider the following 137-residue polypeptide: Phospholipase A2 group V (137 aa).

Positions 1–20 (MKGLLTLAWFLACSVPAVPG) are cleaved as a signal peptide. Intrachain disulfides connect cysteine 46–cysteine 137, cysteine 48–cysteine 64, cysteine 63–cysteine 117, cysteine 70–cysteine 110, cysteine 79–cysteine 103, and cysteine 97–cysteine 108. Ca(2+) contacts are provided by tyrosine 47, glycine 49, and glycine 51. Residue histidine 67 is part of the active site. Aspartate 68 is a Ca(2+) binding site. Aspartate 111 is an active-site residue.

It belongs to the phospholipase A2 family. The cofactor is Ca(2+). Post-translationally, this enzyme lacks one of the seven disulfide bonds found in similar PA2 proteins. As to expression, expressed in peritoneal macrophages (at protein level). Expressed in heart, skeletal muscle and white adipose tissue.

It is found in the secreted. Its subcellular location is the cell membrane. The protein resides in the cytoplasmic vesicle. The protein localises to the phagosome. It localises to the recycling endosome. It is found in the golgi apparatus. Its subcellular location is the cis-Golgi network. The protein resides in the trans-Golgi network. The catalysed reaction is a 1,2-diacyl-sn-glycero-3-phosphocholine + H2O = a 1-acyl-sn-glycero-3-phosphocholine + a fatty acid + H(+). It catalyses the reaction 1-hexadecanoyl-2-(9Z-octadecenoyl)-sn-glycero-3-phosphocholine + H2O = 1-hexadecanoyl-sn-glycero-3-phosphocholine + (9Z)-octadecenoate + H(+). The enzyme catalyses 1-hexadecanoyl-2-(5Z,8Z,11Z,14Z-eicosatetraenoyl)-sn-glycero-3-phosphocholine + H2O = 1-hexadecanoyl-sn-glycero-3-phosphocholine + (5Z,8Z,11Z,14Z)-eicosatetraenoate + H(+). It carries out the reaction 1-hexadecanoyl-2-(9Z,12Z-octadecadienoyl)-sn-glycero-3-phosphoethanolamine + H2O = 1-hexadecanoyl-sn-glycero-3-phosphoethanolamine + (9Z,12Z)-octadecadienoate + H(+). The catalysed reaction is 1-hexadecanoyl-2-(5Z,8Z,11Z,14Z-eicosatetraenoyl)-sn-glycero-3-phosphoethanolamine + H2O = 1-hexadecanoyl-sn-glycero-3-phosphoethanolamine + (5Z,8Z,11Z,14Z)-eicosatetraenoate + H(+). It catalyses the reaction 1-octadecanoyl-2-(5Z,8Z,11Z,14Z-eicosatetraenoyl)-sn-glycero-3-phospho-(1D-myo-inositol) + H2O = 1-octadecanoyl-sn-glycero-3-phospho-(1D-myo-inositol) + (5Z,8Z,11Z,14Z)-eicosatetraenoate + H(+). The enzyme catalyses 1-hexadecanoyl-2-(9Z-octadecenoyl)-sn-glycero-3-phosphoglycerol + H2O = 1-hexadecanoyl-sn-glycero-3-phosphoglycerol + (9Z)-octadecenoate + H(+). It carries out the reaction N-hexadecanoyl-1,2-di-(9Z-octadecenoyl)-sn-glycero-3-phosphoethanolamine + H2O = N-hexadecanoyl-1-(9Z-octadecenoyl)-sn-glycero-3-phosphoethanolamine + (9Z)-octadecenoate + H(+). The catalysed reaction is 1'-[1,2-di-(9Z-octadecenoyl)-sn-glycero-3-phospho]-3'-[1-(9Z-octadecenoyl)-sn-glycero-3-phospho]-glycerol + H2O = 1',3'-bis-[1-(9Z-octadecenoyl)-sn-glycero-3-phospho]-glycerol + (9Z)-octadecenoate + H(+). It catalyses the reaction 1',3'-bis[1,2-di-(9Z-octadecenoyl)-sn-glycero-3-phospho]-glycerol + H2O = 1'-[1,2-di-(9Z-octadecenoyl)-sn-glycero-3-phospho]-3'-[1-(9Z-octadecenoyl)-sn-glycero-3-phospho]-glycerol + (9Z)-octadecenoate + H(+). It participates in lipid metabolism; phospholipid metabolism. Its pathway is lipid metabolism; leukotriene B4 biosynthesis. The protein operates within lipid metabolism; leukotriene C4 biosynthesis. In terms of biological role, secretory calcium-dependent phospholipase A2 that primarily targets extracellular phospholipids. Hydrolyzes the ester bond of the fatty acyl group attached at sn-2 position of phospholipids (phospholipase A2 activity), preferentially releasing fatty acyl groups with a low degree of unsaturation such as oleoyl (C18:1) and linoleoyl (C18:2) groups. Hydrolyzes low-density lipoprotein (LDL) phospholipids releasing unsaturated fatty acids that drive macrophage polarization toward an M2 phenotype. May act in an autocrine and paracrine manner. Contributes to lipid remodeling of cellular membranes at different subcellular locations and generation of lipid mediators involved in pathogen clearance. Cleaves sn-2 fatty acyl chains of cardiolipin, a major component of the inner membrane of mitochondria and bacterial membranes. Promotes phagocytosis of bacteria in macrophages through production of lysophosphatidylethanolamines. Displays bactericidal activity against Gram-positive bacteria by directly hydrolyzing the phospholipids of the bacterial membrane. Promotes phagocytosis and killing of ingested fungi likely through controlling phagosome-lysosome fusion and phagosome maturation. Plays a role in biosynthesis of cysteinyl leukotrienes (CysLTs) in myeloid cells. In eosinophils, triggers perinuclear arachidonate release and LTC4 synthesis in a PLA2G4A-independent way. In neutrophils, amplifies CysLTs biosynthesis initiated by PLA2G4A. Promotes immune complex clearance in macrophages via stimulating synthesis of CysLTs, which act through CYSLTR1 to trigger phagocytosis. May regulate antigen processing in antigen-presenting cells. In pulmonary macrophages regulates IL33 production required for activation of group 2 innate lymphoid cells. May play a role in the biosynthesis of N-acyl ethanolamines that regulate energy metabolism. Hydrolyzes N-acyl phosphatidylethanolamines to N-acyl lysophosphatidylethanolamines, which are further cleaved by a lysophospholipase D to release N-acyl ethanolamines. This chain is Phospholipase A2 group V (Pla2g5), found in Mus musculus (Mouse).